We begin with the raw amino-acid sequence, 433 residues long: Serine--tRNA ligase (433 aa).

Thr-235–Glu-237 serves as a coordination point for L-serine. Residue Arg-266 to Glu-268 coordinates ATP. An L-serine-binding site is contributed by Glu-289. Glu-353–Ser-356 is a binding site for ATP. Ser-388 is a binding site for L-serine.

This sequence belongs to the class-II aminoacyl-tRNA synthetase family. Type-1 seryl-tRNA synthetase subfamily. As to quaternary structure, homodimer. The tRNA molecule binds across the dimer.

It localises to the cytoplasm. The catalysed reaction is tRNA(Ser) + L-serine + ATP = L-seryl-tRNA(Ser) + AMP + diphosphate + H(+). It catalyses the reaction tRNA(Sec) + L-serine + ATP = L-seryl-tRNA(Sec) + AMP + diphosphate + H(+). It participates in aminoacyl-tRNA biosynthesis; selenocysteinyl-tRNA(Sec) biosynthesis; L-seryl-tRNA(Sec) from L-serine and tRNA(Sec): step 1/1. Its function is as follows. Catalyzes the attachment of serine to tRNA(Ser). Is also able to aminoacylate tRNA(Sec) with serine, to form the misacylated tRNA L-seryl-tRNA(Sec), which will be further converted into selenocysteinyl-tRNA(Sec). This Burkholderia lata (strain ATCC 17760 / DSM 23089 / LMG 22485 / NCIMB 9086 / R18194 / 383) protein is Serine--tRNA ligase.